A 410-amino-acid polypeptide reads, in one-letter code: MEVSEERDLYLHSITAALERLNSAASECQSRLLSEHDGSIEDHSANQTAHDNLVQEAYKFLQIAQGPIDTVATCFERTAHVACARSLLEMGAFEGLPIGGESRSTKELAEDLSVDEALLARLMRNSALFEETGPNQYRHTPFSEAYLRPEIRAMFRFAMDEHMPAHLKMHEFLKSNSWTEPTSTSNNPYTYAHDTNGKSMWEYLSERPTRMASFNDGMTLQAMTELWMIDLFPWESLSDQQPTPTTVVAVDIGGGTGMGISRIRSYCCSLPGKFILQDQAHVIQSADPRGNGIEKMAYDFFEEQPIRGALTYLIRRCLHNWPQESIIQILKNVAAAMQPEKSRLLIEEIIVPDMNAGIEEGWMDMIMMNLGAKQRTLKEWEEVLALAGFEVRKIYQIPGNCHGLLEVWLK.

Residues 253-254 (GG), D278, 299-300 (DF), and R315 contribute to the S-adenosyl-L-methionine site. Residue H319 is the Proton acceptor of the active site.

This sequence belongs to the class I-like SAM-binding methyltransferase superfamily. Cation-independent O-methyltransferase family. COMT subfamily.

Its pathway is secondary metabolite biosynthesis. Its function is as follows. O-methyltransferase; part of the gene cluster that mediates the biosynthesis of aflavarin, a bicoumarin that exhibits anti-insectan activity against the fungivorous beetle C.hemipterus. This is O-methyltransferase afvC from Aspergillus flavus (strain ATCC 200026 / FGSC A1120 / IAM 13836 / NRRL 3357 / JCM 12722 / SRRC 167).